The chain runs to 385 residues: Na(+)/H(+) antiporter NhaA (385 aa).

11 helical membrane-spanning segments follow: residues 9-29 (YSAI…NVLD), 45-65 (IFGL…VFFF), 87-107 (IIPG…YLSV), 114-134 (GWPV…AIFG), 155-175 (AGIV…WIIV), 198-218 (TFLI…SVYQ), 220-235 (GIHA…IMLN), 245-265 (ALEP…AAMV), 282-302 (ILLG…IIAL), 312-332 (FFNL…SLLM), and 345-365 (QGVI…IILM).

The protein belongs to the NhaA Na(+)/H(+) (TC 2.A.33) antiporter family.

It is found in the cell membrane. The enzyme catalyses Na(+)(in) + 2 H(+)(out) = Na(+)(out) + 2 H(+)(in). Na(+)/H(+) antiporter that extrudes sodium in exchange for external protons. This chain is Na(+)/H(+) antiporter NhaA, found in Tropheryma whipplei (strain TW08/27) (Whipple's bacillus).